The primary structure comprises 637 residues: Probable potassium transport system protein Kup (637 aa).

12 consecutive transmembrane segments (helical) span residues leucine 24–leucine 44, valine 64–valine 84, alanine 113–isoleucine 133, proline 151–isoleucine 171, leucine 182–isoleucine 202, leucine 225–leucine 245, alanine 261–isoleucine 281, proline 290–alanine 310, isoleucine 351–phenylalanine 371, tyrosine 381–valine 401, leucine 409–asparagine 429, and valine 433–threonine 453.

It belongs to the HAK/KUP transporter (TC 2.A.72) family.

The protein localises to the cell inner membrane. It catalyses the reaction K(+)(in) + H(+)(in) = K(+)(out) + H(+)(out). Its function is as follows. Transport of potassium into the cell. Likely operates as a K(+):H(+) symporter. The protein is Probable potassium transport system protein Kup of Burkholderia ambifaria (strain MC40-6).